The sequence spans 661 residues: Probable urea active transporter 3 (661 aa).

A run of 15 helical transmembrane segments spans residues 13-33, 56-76, 86-106, 132-152, 165-185, 197-217, 251-271, 288-308, 352-372, 397-417, 419-439, 454-474, 495-515, 556-576, and 591-611; these read GIVI…TYVL, GLIS…LTSA, GSMW…VIAL, AVFL…LLLG, VVAA…SGGL, VIVY…SVHI, AVFV…CDPS, YFAG…AAAL, AGVL…LVAF, VTHV…VLFN, IGIT…PAVF, GMII…VGSC, VGNF…SYFF, IGIF…PLPM, and WIIV…FYPL.

This sequence belongs to the sodium:solute symporter (SSF) (TC 2.A.21) family.

The protein localises to the membrane. It localises to the golgi apparatus membrane. Functionally, involved in active transport of urea. This chain is Probable urea active transporter 3 (dur3-3), found in Schizosaccharomyces pombe (strain 972 / ATCC 24843) (Fission yeast).